The primary structure comprises 506 residues: GMP synthase [glutamine-hydrolyzing] (506 aa).

A Glutamine amidotransferase type-1 domain is found at 3–188 (GFVILDFGSQ…AQGMCKAPAD (186 aa)). The active-site Nucleophile is cysteine 80. Active-site residues include histidine 162 and glutamate 164. Residues 189-381 (WDAPHIKDIL…LGLPKEMLWR (193 aa)) form the GMPS ATP-PPase domain. An ATP-binding site is contributed by 217 to 223 (SGGVDST).

In terms of assembly, homodimer.

It catalyses the reaction XMP + L-glutamine + ATP + H2O = GMP + L-glutamate + AMP + diphosphate + 2 H(+). Its pathway is purine metabolism; GMP biosynthesis; GMP from XMP (L-Gln route): step 1/1. In terms of biological role, catalyzes the synthesis of GMP from XMP. The polypeptide is GMP synthase [glutamine-hydrolyzing] (Bdellovibrio bacteriovorus (strain ATCC 15356 / DSM 50701 / NCIMB 9529 / HD100)).